A 128-amino-acid polypeptide reads, in one-letter code: Large ribosomal subunit protein bL17 (128 aa).

It belongs to the bacterial ribosomal protein bL17 family. As to quaternary structure, part of the 50S ribosomal subunit. Contacts protein L32.

In Tolumonas auensis (strain DSM 9187 / NBRC 110442 / TA 4), this protein is Large ribosomal subunit protein bL17.